The chain runs to 157 residues: S-ribosylhomocysteine lyase (157 aa).

Positions 54, 58, and 126 each coordinate Fe cation.

Belongs to the LuxS family. In terms of assembly, homodimer. Fe cation serves as cofactor.

It carries out the reaction S-(5-deoxy-D-ribos-5-yl)-L-homocysteine = (S)-4,5-dihydroxypentane-2,3-dione + L-homocysteine. Its function is as follows. Involved in the synthesis of autoinducer 2 (AI-2) which is secreted by bacteria and is used to communicate both the cell density and the metabolic potential of the environment. The regulation of gene expression in response to changes in cell density is called quorum sensing. Catalyzes the transformation of S-ribosylhomocysteine (RHC) to homocysteine (HC) and 4,5-dihydroxy-2,3-pentadione (DPD). The protein is S-ribosylhomocysteine lyase of Bacillus anthracis (strain A0248).